The primary structure comprises 139 residues: Thiosulfate:glutathione sulfurtransferase (139 aa).

The residue at position 26 (Ser26) is a Phosphoserine. In terms of domain architecture, Rhodanese spans 37 to 138 (HDPNVVLVDV…WVSHGGDKLD (102 aa)). Cys98 acts as the Cysteine persulfide intermediate in catalysis.

The protein localises to the mitochondrion. The catalysed reaction is thiosulfate + glutathione = S-sulfanylglutathione + sulfite + H(+). With respect to regulation, GSS(-) is a potent inhibitor of RDL1, since the presence of the sulfur dioxygenase strongly increases the RDL1 catalytic activity. Its function is as follows. Thiosulfate:glutathione sulfurtransferase (TST) required to produce S-sulfanylglutathione (GSS(-)), a central intermediate in hydrogen sulfide metabolism. Provides the link between the first step in H(2)S metabolism performed by the sulfide:quinone oxidoreductase (SQOR) which catalyzes the conversion of H(2)S to thiosulfate, and the sulfur dioxygenase (SDO) which uses GSS(-) as substrate. The thermodynamic coupling of the irreversible SDO and reversible TST reactions provides a model for the physiologically relevant reaction with thiosulfate as the sulfane donor. This Saccharomyces cerevisiae (strain ATCC 204508 / S288c) (Baker's yeast) protein is Thiosulfate:glutathione sulfurtransferase (RDL1).